Reading from the N-terminus, the 314-residue chain is DNA-directed RNA polymerase subunit alpha (314 aa).

Residues 1 to 228 (MIEIEKPRIE…EHLNIFVGLT (228 aa)) are alpha N-terminal domain (alpha-NTD). The segment at 245 to 314 (KEKVLEMSIE…DLGLGLRKED (70 aa)) is alpha C-terminal domain (alpha-CTD).

This sequence belongs to the RNA polymerase alpha chain family. In terms of assembly, homodimer. The RNAP catalytic core consists of 2 alpha, 1 beta, 1 beta' and 1 omega subunit. When a sigma factor is associated with the core the holoenzyme is formed, which can initiate transcription.

The catalysed reaction is RNA(n) + a ribonucleoside 5'-triphosphate = RNA(n+1) + diphosphate. Functionally, DNA-dependent RNA polymerase catalyzes the transcription of DNA into RNA using the four ribonucleoside triphosphates as substrates. This Staphylococcus aureus (strain bovine RF122 / ET3-1) protein is DNA-directed RNA polymerase subunit alpha.